The chain runs to 713 residues: Protein-glucosylgalactosylhydroxylysine glucosidase (713 aa).

A signal peptide spans 1–21 (MIINSQEYLQPPQWWNERVEA). N-linked (GlcNAc...) asparagine glycans are attached at residues Asn104, Asn160, Asn171, Asn186, and Asn283. 317–318 (WD) lines the substrate pocket. Asn361 is a glycosylation site (N-linked (GlcNAc...) asparagine). The active-site Proton donor is the Glu451. Residues Asn457 and Asn481 are each glycosylated (N-linked (GlcNAc...) asparagine). 521 to 522 (KQ) serves as a coordination point for substrate. N-linked (GlcNAc...) asparagine glycosylation is found at Asn535, Asn576, and Asn662.

This sequence belongs to the glycosyl hydrolase 65 family.

The protein localises to the secreted. The enzyme catalyses (5R)-5-O-[alpha-D-glucosyl-(1-&gt;2)-beta-D-galactosyl]-5-hydroxy-L-lysyl-[collagen] + H2O = (5R)-5-O-(beta-D-galactosyl)-5-hydroxy-L-lysyl-[collagen] + D-glucose. Functionally, catalyzes the hydrolysis of glucose from the disaccharide unit linked to hydroxylysine residues of collagen and collagen-like proteins. This is Protein-glucosylgalactosylhydroxylysine glucosidase from Dictyostelium discoideum (Social amoeba).